The following is a 121-amino-acid chain: Conopressin-conophysin (121 aa).

A signal peptide spans 1–20 (MGRLTMALCWLLLLLLTTQA). C21 and C26 form a disulfide bridge. Residue P27 is modified to 4-hydroxyproline; partial; in Conopressin-ba1c. G29 carries the glycine amide modification. 7 cysteine pairs are disulfide-bonded: C43-C83, C46-C57, C51-C73, C58-C63, C90-C108, C102-C120, and C109-C114.

The protein belongs to the vasopressin/oxytocin family. Expressed by the venom duct.

It is found in the secreted. The chain is Conopressin-conophysin from Conus bayani (Bayan's cone).